The chain runs to 503 residues: Aromatase (503 aa).

2 helical membrane passes run 19-39 (EVVP…LLVW) and 53-73 (FLGI…IGSA). Residues Asp309 and Met374 each coordinate substrate. Residue Cys437 coordinates heme.

Belongs to the cytochrome P450 family. Heme is required as a cofactor.

The protein resides in the endoplasmic reticulum membrane. It localises to the microsome membrane. It carries out the reaction testosterone + 3 reduced [NADPH--hemoprotein reductase] + 3 O2 = 17beta-estradiol + formate + 3 oxidized [NADPH--hemoprotein reductase] + 4 H2O + 4 H(+). The catalysed reaction is androst-4-ene-3,17-dione + 3 reduced [NADPH--hemoprotein reductase] + 3 O2 = estrone + formate + 3 oxidized [NADPH--hemoprotein reductase] + 4 H2O + 4 H(+). The enzyme catalyses androst-4-ene-3,17-dione + reduced [NADPH--hemoprotein reductase] + O2 = 19-hydroxyandrost-4-ene-3,17-dione + oxidized [NADPH--hemoprotein reductase] + H2O + H(+). It catalyses the reaction 19-hydroxyandrost-4-ene-3,17-dione + reduced [NADPH--hemoprotein reductase] + O2 = 19-oxo-androst-4-ene-3,17-dione + oxidized [NADPH--hemoprotein reductase] + 2 H2O + H(+). It carries out the reaction 19-oxo-androst-4-ene-3,17-dione + reduced [NADPH--hemoprotein reductase] + O2 = estrone + formate + oxidized [NADPH--hemoprotein reductase] + H2O + 2 H(+). The catalysed reaction is estrone + reduced [NADPH--hemoprotein reductase] + O2 = 2-hydroxyestrone + oxidized [NADPH--hemoprotein reductase] + H2O + H(+). The enzyme catalyses 17beta-hydroxy-5alpha-androstan-3-one + reduced [NADPH--hemoprotein reductase] + O2 = 17beta,19-dihydroxy-3-oxo-5alpha-androstanone + oxidized [NADPH--hemoprotein reductase] + H2O + H(+). It catalyses the reaction 17beta,19-dihydroxy-3-oxo-5alpha-androstanone + reduced [NADPH--hemoprotein reductase] + O2 = 17beta-hydroxy-3,19-dioxo-5alpha-androstanone + oxidized [NADPH--hemoprotein reductase] + 2 H2O + H(+). It carries out the reaction 17beta-hydroxy-3,19-dioxo-5alpha-androstanone + reduced [NADPH--hemoprotein reductase] + O2 = 17beta-hydroxy-3-oxo-19-nor-5alpha-androst-1-ene + formate + oxidized [NADPH--hemoprotein reductase] + H2O + 2 H(+). Its pathway is steroid hormone biosynthesis. In terms of biological role, a cytochrome P450 monooxygenase that catalyzes the conversion of C19 androgens, androst-4-ene-3,17-dione (androstenedione) and testosterone to the C18 estrogens, estrone and estradiol, respectively. Catalyzes three successive oxidations of C19 androgens: two conventional oxidations at C19 yielding 19-hydroxy and 19-oxo/19-aldehyde derivatives, followed by a third oxidative aromatization step that involves C1-beta hydrogen abstraction combined with cleavage of the C10-C19 bond to yield a phenolic A ring and formic acid. Alternatively, the third oxidative reaction yields a 19-norsteroid and formic acid. Converts dihydrotestosterone to delta1,10-dehydro 19-nordihydrotestosterone and may play a role in homeostasis of this potent androgen. Also displays 2-hydroxylase activity toward estrone. Mechanistically, uses molecular oxygen inserting one oxygen atom into a substrate, and reducing the second into a water molecule, with two electrons provided by NADPH via cytochrome P450 reductase (CPR; NADPH-ferrihemoprotein reductase). The chain is Aromatase (CYP19A1) from Bos taurus (Bovine).